Consider the following 1368-residue polypeptide: DNA-directed RNA polymerase subunit beta' (1368 aa).

A disordered region spans residues 1–38 (MTSSSKPARKTSKSKSKASKAAEAPAAPSNELSREAPT). A compositionally biased stretch (basic residues) spans 7–18 (PARKTSKSKSKA). Positions 19–29 (SKAAEAPAAPS) are enriched in low complexity. Positions 250, 318, 325, and 328 each coordinate Zn(2+). The interval 1340–1368 (AGEELAEEHVPDPGALEGLQEEGLLSQDS) is disordered. Low complexity predominate over residues 1353–1368 (GALEGLQEEGLLSQDS).

Belongs to the RNA polymerase beta' chain family. RpoC2 subfamily. In cyanobacteria the RNAP catalytic core is composed of 2 alpha, 1 beta, 1 beta', 1 gamma and 1 omega subunit. When a sigma factor is associated with the core the holoenzyme is formed, which can initiate transcription. Requires Zn(2+) as cofactor.

It carries out the reaction RNA(n) + a ribonucleoside 5'-triphosphate = RNA(n+1) + diphosphate. In terms of biological role, DNA-dependent RNA polymerase catalyzes the transcription of DNA into RNA using the four ribonucleoside triphosphates as substrates. The polypeptide is DNA-directed RNA polymerase subunit beta' (Synechococcus sp. (strain RCC307)).